The sequence spans 209 residues: Outer-membrane lipoprotein carrier protein (209 aa).

Positions 1–21 (MHRQLRYAVLATALFASTAFA) are cleaved as a signal peptide.

The protein belongs to the LolA family. As to quaternary structure, monomer.

The protein localises to the periplasm. Participates in the translocation of lipoproteins from the inner membrane to the outer membrane. Only forms a complex with a lipoprotein if the residue after the N-terminal Cys is not an aspartate (The Asp acts as a targeting signal to indicate that the lipoprotein should stay in the inner membrane). The chain is Outer-membrane lipoprotein carrier protein from Xanthomonas oryzae pv. oryzae (strain MAFF 311018).